A 150-amino-acid chain; its full sequence is Ribonuclease K6 (150 aa).

A signal peptide spans 1–23; that stretch reads MVLCFPLLLLLLVLWGPVCPLHA. The active-site Proton acceptor is H38. Cystine bridges form between C46-C104, C60-C114, C78-C129, and C85-C92. Residue N55 is glycosylated (N-linked (GlcNAc...) asparagine). Residues 61–65 and K86 each bind substrate; that span reads KHQNT. N100 carries N-linked (GlcNAc...) asparagine glycosylation. R105 contacts substrate. Catalysis depends on H145, which acts as the Proton donor.

It belongs to the pancreatic ribonuclease family. Interacts (via N-terminus) with bacterial lipopolysaccharide (LPS). As to expression, highly expressed in spleen (at protein level). Has little or no expression in healthy kidneys (at protein level). Detected in interstitial leukocytes in infected kidneys (at protein level). Expressed in ureter where it localizes to urothelial and submucosal leukocytes (at protein level). Strong expression in lung and thymus, and lower expression in heart, placenta, pancreas, liver, brain and skeletal muscle. Also expressed in monocytes and neutrophils.

It localises to the secreted. It is found in the lysosome. The protein localises to the cytoplasmic granule. Ribonuclease which shows a preference for the pyrimidines uridine and cytosine. Has potent antibacterial activity against a range of Gram-positive and Gram-negative bacteria, including P.aeruginosa, A.baumanii, M.luteus, S.aureus, E.faecalis, E.faecium, S.saprophyticus and E.coli. Causes loss of bacterial membrane integrity, and also promotes agglutination of Gram-negative bacteria. Probably contributes to urinary tract sterility. Bactericidal activity is independent of RNase activity. This is Ribonuclease K6 (RNASE6) from Homo sapiens (Human).